A 491-amino-acid polypeptide reads, in one-letter code: Cobyric acid synthase (491 aa).

The GATase cobBQ-type domain occupies 258-445; sequence ALKVAVPVLG…MHGLFGADAF (188 aa). Cysteine 340 (nucleophile) is an active-site residue. Residue histidine 437 is part of the active site.

Belongs to the CobB/CobQ family. CobQ subfamily.

It participates in cofactor biosynthesis; adenosylcobalamin biosynthesis. Its function is as follows. Catalyzes amidations at positions B, D, E, and G on adenosylcobyrinic A,C-diamide. NH(2) groups are provided by glutamine, and one molecule of ATP is hydrogenolyzed for each amidation. In Mesorhizobium japonicum (strain LMG 29417 / CECT 9101 / MAFF 303099) (Mesorhizobium loti (strain MAFF 303099)), this protein is Cobyric acid synthase.